The chain runs to 265 residues: Phosphonoacetaldehyde hydrolase (265 aa).

Asp9 functions as the Nucleophile in the catalytic mechanism. The Mg(2+) site is built by Asp9 and Ala11. Lys50 serves as the catalytic Schiff-base intermediate with substrate. Residue Asp184 coordinates Mg(2+).

It belongs to the HAD-like hydrolase superfamily. PhnX family. Homodimer. Mg(2+) serves as cofactor.

The catalysed reaction is phosphonoacetaldehyde + H2O = acetaldehyde + phosphate + H(+). Its function is as follows. Involved in phosphonate degradation. In Lactiplantibacillus plantarum (strain ATCC BAA-793 / NCIMB 8826 / WCFS1) (Lactobacillus plantarum), this protein is Phosphonoacetaldehyde hydrolase.